The primary structure comprises 510 residues: 2,3-bisphosphoglycerate-independent phosphoglycerate mutase (510 aa).

Residues D13 and S63 each contribute to the Mn(2+) site. The Phosphoserine intermediate role is filled by S63. Substrate is bound by residues H124, 154-155, R186, R192, 262-265, and K334; these read RD and RADR. D401, H405, D442, H443, and H461 together coordinate Mn(2+).

Belongs to the BPG-independent phosphoglycerate mutase family. Monomer. It depends on Mn(2+) as a cofactor.

It catalyses the reaction (2R)-2-phosphoglycerate = (2R)-3-phosphoglycerate. Its pathway is carbohydrate degradation; glycolysis; pyruvate from D-glyceraldehyde 3-phosphate: step 3/5. In terms of biological role, catalyzes the interconversion of 2-phosphoglycerate and 3-phosphoglycerate. The sequence is that of 2,3-bisphosphoglycerate-independent phosphoglycerate mutase from Vibrio vulnificus (strain YJ016).